Here is a 372-residue protein sequence, read N- to C-terminus: Chaperone protein DnaJ (372 aa).

In terms of domain architecture, J spans 3 to 68; it reads NLYEILEVNE…EKRKKYDMYG (66 aa). The segment at 130–212 adopts a CR-type zinc-finger fold; it reads GTKKEISYKK…CKGKGYEIER (83 aa). Zn(2+) is bound by residues C143, C146, C160, C163, C186, C189, C200, and C203. 4 CXXCXGXG motif repeats span residues 143–150, 160–167, 186–193, and 200–207; these read CHVCNGDG, CEKCHGTG, CDKCHGEG, and CENCKGKG.

Belongs to the DnaJ family. In terms of assembly, homodimer. Zn(2+) is required as a cofactor.

The protein localises to the cytoplasm. Functionally, participates actively in the response to hyperosmotic and heat shock by preventing the aggregation of stress-denatured proteins and by disaggregating proteins, also in an autonomous, DnaK-independent fashion. Unfolded proteins bind initially to DnaJ; upon interaction with the DnaJ-bound protein, DnaK hydrolyzes its bound ATP, resulting in the formation of a stable complex. GrpE releases ADP from DnaK; ATP binding to DnaK triggers the release of the substrate protein, thus completing the reaction cycle. Several rounds of ATP-dependent interactions between DnaJ, DnaK and GrpE are required for fully efficient folding. Also involved, together with DnaK and GrpE, in the DNA replication of plasmids through activation of initiation proteins. In Finegoldia magna (strain ATCC 29328 / DSM 20472 / WAL 2508) (Peptostreptococcus magnus), this protein is Chaperone protein DnaJ.